Consider the following 329-residue polypeptide: ADP-L-glycero-D-manno-heptose-6-epimerase (329 aa).

NADP(+) contacts are provided by residues 10 to 11 (FI), 31 to 32 (DD), K38, K53, 74 to 78 (QGACS), and N91. The active-site Proton acceptor is the Y138. K142 is an NADP(+) binding site. N167 lines the substrate pocket. V168 and K176 together coordinate NADP(+). K176 acts as the Proton acceptor in catalysis. Residues R178, H185, 199–202 (FAGW), R212, and Y291 each bind substrate.

The protein belongs to the NAD(P)-dependent epimerase/dehydratase family. HldD subfamily. In terms of assembly, homopentamer. Requires NADP(+) as cofactor.

The enzyme catalyses ADP-D-glycero-beta-D-manno-heptose = ADP-L-glycero-beta-D-manno-heptose. It functions in the pathway nucleotide-sugar biosynthesis; ADP-L-glycero-beta-D-manno-heptose biosynthesis; ADP-L-glycero-beta-D-manno-heptose from D-glycero-beta-D-manno-heptose 7-phosphate: step 4/4. The protein operates within bacterial outer membrane biogenesis; LPS core biosynthesis. Its function is as follows. Catalyzes the interconversion between ADP-D-glycero-beta-D-manno-heptose and ADP-L-glycero-beta-D-manno-heptose via an epimerization at carbon 6 of the heptose. This is ADP-L-glycero-D-manno-heptose-6-epimerase from Bordetella parapertussis (strain 12822 / ATCC BAA-587 / NCTC 13253).